The sequence spans 300 residues: MDYGDDDRSSSWNWQVDNYNHQPQSHFSDVPDCTMTEVTLNQEDHSYMFDDENTPVKACSELGYHVTTEDTNRKMEVHSETRSALKRRRMLQFEDQPETSLFSSESFSAILKSSARDDTFDELLPEGSQLIEGFSEDASASSFEGLDLYAEEWYADCLNDAETPMLPDDLNFGSPDVQVDISEYLNVPPETETREVQRPVTRSSPNVIFKGRKSFSRPVSKLPSSIIYPFAFIKPCGVHGGMTLKDINQKIRNPPAKPKAHIEEPAVIQTSAFSGKPVVGKTKIRTEGGKGSITIMRTRG.

As to quaternary structure, interacts (via C-terminal domain) with MIP1.

The protein resides in the nucleus. Its function is as follows. Required for mitotic division of the generative cell nucleus and the development of mature tricellular pollen grains, and for male and female meiosis. The polypeptide is Protein XRI1 (XRI1) (Arabidopsis thaliana (Mouse-ear cress)).